We begin with the raw amino-acid sequence, 66 residues long: Large ribosomal subunit protein bL33c (66 aa).

This sequence belongs to the bacterial ribosomal protein bL33 family.

The protein localises to the plastid. Its subcellular location is the chloroplast. This Cucumis sativus (Cucumber) protein is Large ribosomal subunit protein bL33c.